The primary structure comprises 213 residues: Uridine kinase (213 aa).

ATP is bound at residue 13–20; the sequence is GGSCSGKT.

It belongs to the uridine kinase family.

The protein localises to the cytoplasm. It carries out the reaction uridine + ATP = UMP + ADP + H(+). It catalyses the reaction cytidine + ATP = CMP + ADP + H(+). It functions in the pathway pyrimidine metabolism; CTP biosynthesis via salvage pathway; CTP from cytidine: step 1/3. Its pathway is pyrimidine metabolism; UMP biosynthesis via salvage pathway; UMP from uridine: step 1/1. In Mycoplasma pneumoniae (strain ATCC 29342 / M129 / Subtype 1) (Mycoplasmoides pneumoniae), this protein is Uridine kinase (udk).